A 223-amino-acid chain; its full sequence is Urease accessory protein UreG (223 aa).

The interval 1 to 30 (MAKHSHDHTHDHHDRPRRVRKPGEPLRIGV) is disordered. Residue 32–39 (GPVGSGKT) coordinates GTP.

The protein belongs to the SIMIBI class G3E GTPase family. UreG subfamily. In terms of assembly, homodimer. UreD, UreF and UreG form a complex that acts as a GTP-hydrolysis-dependent molecular chaperone, activating the urease apoprotein by helping to assemble the nickel containing metallocenter of UreC. The UreE protein probably delivers the nickel.

It localises to the cytoplasm. In terms of biological role, facilitates the functional incorporation of the urease nickel metallocenter. This process requires GTP hydrolysis, probably effectuated by UreG. In Mycobacterium ulcerans (strain Agy99), this protein is Urease accessory protein UreG.